Consider the following 342-residue polypeptide: Sideroflexin-5 (342 aa).

Residues 1–24 (MADTATTASAASAAASASNASSDA) are compositionally biased toward low complexity. Residues 1–29 (MADTATTASAASAAASASNASSDAPPFQL) are disordered. 4 consecutive transmembrane segments (helical) span residues 105–125 (IFMP…VVGL), 165–185 (FIQG…GLNV), 256–276 (LTRV…MSML), and 289–309 (LLPV…PLAI).

This sequence belongs to the sideroflexin family. Specifically expressed in the brain.

It is found in the mitochondrion inner membrane. The enzyme catalyses citrate(in) = citrate(out). Mitochondrial amino-acid transporter. Transports citrate. Does not act as a serine transporter: not able to mediate transport of serine into mitochondria. In brown adipose tissue, plays a role in the regulation of UCP1-dependent thermogenesis probably by supporting mitochondrial glycerol-3-phosphate utilization. The protein is Sideroflexin-5 of Rattus norvegicus (Rat).